The primary structure comprises 228 residues: Ion-translocating oxidoreductase complex subunit E (228 aa).

A run of 5 helical transmembrane segments spans residues 18–38 (ALVQLLGMCPLLAVTSTATNA), 69–89 (IPIYVMIIAAVVSIVQMLINA), 92–112 (FGLYQSLGIFIPLIVTNCIVV), 125–145 (LLSALDGFAIGLGATGAMFVL), and 182–202 (PFLLAMLPPGAFIGLGMMLAV).

The protein belongs to the NqrDE/RnfAE family. In terms of assembly, the complex is composed of six subunits: RnfA, RnfB, RnfC, RnfD, RnfE and RnfG.

Its subcellular location is the cell inner membrane. In terms of biological role, part of a membrane-bound complex that couples electron transfer with translocation of ions across the membrane. This is Ion-translocating oxidoreductase complex subunit E from Cronobacter sakazakii (strain ATCC BAA-894) (Enterobacter sakazakii).